A 338-amino-acid chain; its full sequence is Nucleoid-associated protein PM1885 (338 aa).

This sequence belongs to the YejK family.

Its subcellular location is the cytoplasm. It localises to the nucleoid. This is Nucleoid-associated protein PM1885 from Pasteurella multocida (strain Pm70).